The chain runs to 1047 residues: Helicase-like transcription factor CHR27 (1047 aa).

Over residues 1–11 (MDSAIEISSGS) the composition is skewed to low complexity. 3 disordered regions span residues 1 to 89 (MDSA…SGSG), 103 to 130 (RTLP…SGSR), and 145 to 174 (KRTL…GSRF). Composition is skewed to polar residues over residues 52 to 88 (TNQA…SSGS) and 118 to 128 (SGTNNISNASG). The 302-residue stretch at 296–597 (ETSSFNCPGG…YSYFRFLRYD (302 aa)) folds into the Helicase ATP-binding domain. 309–316 (DDQGLGKT) is a binding site for ATP. Disordered regions lie at residues 349 to 407 (ADDE…TRAF) and 511 to 533 (VGAS…SEPD). Positions 354 to 368 (DNAKHESGSHVKPEL) are enriched in basic and acidic residues. Residues 370–379 (VSSNSETSVL) show a composition bias toward polar residues. Positions 385-400 (DENDSSDMEKAEDEEA) are enriched in acidic residues. Residues 511–523 (VGASKKSKRRGRK) show a composition bias toward basic residues. The RING-type; degenerate zinc-finger motif lies at 751-790 (CYECNEPPEKPVVTLCGHIFCYECVLEYITGDENTCPVPR). The span at 851–868 (QPDSPNSAQHGQMPSSSR) shows a compositional bias: polar residues. The disordered stretch occupies residues 851 to 873 (QPDSPNSAQHGQMPSSSRPYDDD). The Helicase C-terminal domain occupies 887-1042 (SPSQGAVKTI…ATRLTVDDLK (156 aa)).

This sequence belongs to the SNF2/RAD54 helicase family. RAD16 subfamily. Interacts with SUVR2. Interacts with itself.

The protein localises to the nucleus. Its function is as follows. Probable helicase-like transcription factor involved in transcriptional gene silencing. Associates with SUVR2 and contributes to transcriptional gene silencing at RNA-directed DNA methylation (RdDM) target loci but also at RdDM-independent target loci. May be involved in nucleosome positioning to form ordered nucleosome arrays on chromatin. Associates with SUVR2 and functions redundantly with FRG2. Required for the efficient methylation of a broad range of RdDM target loci. The protein is Helicase-like transcription factor CHR27 of Arabidopsis thaliana (Mouse-ear cress).